The chain runs to 154 residues: 17.8 kDa class I heat shock protein (154 aa).

Residues 40-154 (ESSAFANTRI…PEVKSIEISG (115 aa)) enclose the sHSP domain.

The protein belongs to the small heat shock protein (HSP20) family. In terms of assembly, forms oligomeric structures.

Its subcellular location is the cytoplasm. The chain is 17.8 kDa class I heat shock protein from Solanum lycopersicum (Tomato).